We begin with the raw amino-acid sequence, 392 residues long: Formate-dependent phosphoribosylglycinamide formyltransferase (392 aa).

Residues 22-23 (EL) and Glu82 each bind N(1)-(5-phospho-beta-D-ribosyl)glycinamide. ATP contacts are provided by residues Arg114, Lys155, 160-165 (SSGKGQ), 195-198 (EGVV), and Glu203. The region spanning 119–308 (RLAAEELWVP…EFALHVRAFL (190 aa)) is the ATP-grasp domain. Mg(2+) contacts are provided by Glu267 and Glu279. N(1)-(5-phospho-beta-D-ribosyl)glycinamide contacts are provided by residues Asp286, Lys355, and 362-363 (RR).

Belongs to the PurK/PurT family. In terms of assembly, homodimer.

The enzyme catalyses N(1)-(5-phospho-beta-D-ribosyl)glycinamide + formate + ATP = N(2)-formyl-N(1)-(5-phospho-beta-D-ribosyl)glycinamide + ADP + phosphate + H(+). Its pathway is purine metabolism; IMP biosynthesis via de novo pathway; N(2)-formyl-N(1)-(5-phospho-D-ribosyl)glycinamide from N(1)-(5-phospho-D-ribosyl)glycinamide (formate route): step 1/1. Its function is as follows. Involved in the de novo purine biosynthesis. Catalyzes the transfer of formate to 5-phospho-ribosyl-glycinamide (GAR), producing 5-phospho-ribosyl-N-formylglycinamide (FGAR). Formate is provided by PurU via hydrolysis of 10-formyl-tetrahydrofolate. This is Formate-dependent phosphoribosylglycinamide formyltransferase from Erwinia tasmaniensis (strain DSM 17950 / CFBP 7177 / CIP 109463 / NCPPB 4357 / Et1/99).